The primary structure comprises 210 residues: MDLTVTNLACARGGVTVLERVSFRLSRGAALILRGPNGIGKTTLLRTVAGLQPAVAGEISMPPEAVAYAAHADGLKATLTVAENLAFWAAIYGTDRAARAIERMNLAALADRQAQNLSAGQKRRLGLARLLVTGRPLWVLDEPTVSLDAASVALFGDVVRTHLAEGGAALMATHIDLGLAEAEVLDLAPYRAETPAGTEPADDPFAGVTA.

In terms of domain architecture, ABC transporter spans 3–209; sequence LTVTNLACAR…PADDPFAGVT (207 aa). 35–42 is a binding site for ATP; that stretch reads GPNGIGKT.

It belongs to the ABC transporter superfamily. CcmA exporter (TC 3.A.1.107) family. As to quaternary structure, the complex is composed of two ATP-binding proteins (CcmA) and two transmembrane proteins (CcmB).

Its subcellular location is the cell inner membrane. The enzyme catalyses heme b(in) + ATP + H2O = heme b(out) + ADP + phosphate + H(+). Its function is as follows. Part of the ABC transporter complex CcmAB involved in the biogenesis of c-type cytochromes; once thought to export heme, this seems not to be the case, but its exact role is uncertain. Responsible for energy coupling to the transport system. The sequence is that of Cytochrome c biogenesis ATP-binding export protein CcmA from Cereibacter sphaeroides (strain ATCC 17023 / DSM 158 / JCM 6121 / CCUG 31486 / LMG 2827 / NBRC 12203 / NCIMB 8253 / ATH 2.4.1.) (Rhodobacter sphaeroides).